An 86-amino-acid chain; its full sequence is Large ribosomal subunit protein bL31B (86 aa).

This sequence belongs to the bacterial ribosomal protein bL31 family. Type B subfamily. As to quaternary structure, part of the 50S ribosomal subunit.

The protein is Large ribosomal subunit protein bL31B of Streptococcus agalactiae serotype III (strain NEM316).